A 32-amino-acid chain; its full sequence is U21-ctenitoxin-Co1a (32 aa).

3 disulfide bridges follow: Cys3/Cys17, Cys10/Cys21, and Cys16/Cys30.

In terms of tissue distribution, expressed by the venom gland.

The protein localises to the secreted. Its function is as follows. Not toxic to mice by intracerebroventricular injection. The sequence is that of U21-ctenitoxin-Co1a from Ctenus ornatus (Brazilian spider).